A 192-amino-acid chain; its full sequence is Lipid A acyltransferase PagP (192 aa).

The first 24 residues, 1–24 (MWLRFCAPALMAWYWVFFPSTSQA), serve as a signal peptide directing secretion. Catalysis depends on residues His-63, Asp-106, and Ser-107.

This sequence belongs to the lipid A palmitoyltransferase family. As to quaternary structure, homodimer.

The protein resides in the cell outer membrane. The enzyme catalyses a lipid A + a 1,2-diacyl-sn-glycero-3-phosphocholine = a hepta-acyl lipid A + a 2-acyl-sn-glycero-3-phosphocholine. It catalyses the reaction a lipid IVA + a 1,2-diacyl-sn-glycero-3-phosphocholine = a lipid IVB + a 2-acyl-sn-glycero-3-phosphocholine. It carries out the reaction a lipid IIA + a 1,2-diacyl-sn-glycero-3-phosphocholine = a lipid IIB + a 2-acyl-sn-glycero-3-phosphocholine. In terms of biological role, transfers a fatty acid residue from the sn-1 position of a phospholipid to the N-linked hydroxyfatty acid chain on the proximal unit of lipid A or its precursors. This chain is Lipid A acyltransferase PagP, found in Musicola paradisiaca (strain Ech703) (Dickeya paradisiaca).